A 234-amino-acid polypeptide reads, in one-letter code: tRNA (guanine-N(1)-)-methyltransferase (234 aa).

Residues G112 and 132 to 137 (IGDFIL) contribute to the S-adenosyl-L-methionine site.

This sequence belongs to the RNA methyltransferase TrmD family. Homodimer.

The protein resides in the cytoplasm. It catalyses the reaction guanosine(37) in tRNA + S-adenosyl-L-methionine = N(1)-methylguanosine(37) in tRNA + S-adenosyl-L-homocysteine + H(+). In terms of biological role, specifically methylates guanosine-37 in various tRNAs. The polypeptide is tRNA (guanine-N(1)-)-methyltransferase (Campylobacter jejuni (strain RM1221)).